The primary structure comprises 101 residues: YCLTINTTICAGYCMTRDINGKLFLPKSALSQDVCTYRDFTYRTVEIPGCPHHVAPYFSYPVAMSCKCGKCNTDYSDCIHEAVKTNYCTKPQTFYLGGFSV.

Disulfide bonds link Cys2–Cys88, Cys10–Cys66, Cys14–Cys68, and Cys71–Cys78. Asn6 carries an N-linked (GlcNAc...) asparagine glycan.

The protein belongs to the glycoprotein hormones subunit beta family. As to quaternary structure, heterodimer of a common alpha chain and a unique beta chain which confers biological specificity to thyrotropin, lutropin, follitropin and gonadotropin.

It localises to the secreted. Functionally, indispensable for the control of thyroid structure and metabolism. The sequence is that of Thyrotropin subunit beta (TSHB) from Phodopus sungorus (Striped hairy-footed hamster).